Consider the following 274-residue polypeptide: 4-diphosphocytidyl-2-C-methyl-D-erythritol kinase (274 aa).

The active site involves K7. 90–100 (PMGGGLGGGSS) provides a ligand contact to ATP. Residue D132 is part of the active site.

The protein belongs to the GHMP kinase family. IspE subfamily.

It carries out the reaction 4-CDP-2-C-methyl-D-erythritol + ATP = 4-CDP-2-C-methyl-D-erythritol 2-phosphate + ADP + H(+). It participates in isoprenoid biosynthesis; isopentenyl diphosphate biosynthesis via DXP pathway; isopentenyl diphosphate from 1-deoxy-D-xylulose 5-phosphate: step 3/6. Catalyzes the phosphorylation of the position 2 hydroxy group of 4-diphosphocytidyl-2C-methyl-D-erythritol. The polypeptide is 4-diphosphocytidyl-2-C-methyl-D-erythritol kinase (Dechloromonas aromatica (strain RCB)).